Here is an 837-residue protein sequence, read N- to C-terminus: Protein translocase subunit SecA (837 aa).

Residues Q85, 103–107 (GEGKT), and D493 each bind ATP. Residues C821, C823, C832, and H833 each contribute to the Zn(2+) site.

Belongs to the SecA family. In terms of assembly, monomer and homodimer. Part of the essential Sec protein translocation apparatus which comprises SecA, SecYEG and auxiliary proteins SecDF. Other proteins may also be involved. The cofactor is Zn(2+).

The protein resides in the cell membrane. The protein localises to the cytoplasm. The catalysed reaction is ATP + H2O + cellular proteinSide 1 = ADP + phosphate + cellular proteinSide 2.. Its function is as follows. Part of the Sec protein translocase complex. Interacts with the SecYEG preprotein conducting channel. Has a central role in coupling the hydrolysis of ATP to the transfer of proteins into and across the cell membrane, serving as an ATP-driven molecular motor driving the stepwise translocation of polypeptide chains across the membrane. This Streptococcus pneumoniae (strain ATCC BAA-255 / R6) protein is Protein translocase subunit SecA.